The sequence spans 350 residues: Putative zinc metalloprotease jhp_0242 (350 aa).

Histidine 16 is a Zn(2+) binding site. Glutamate 17 is a catalytic residue. Histidine 20 contributes to the Zn(2+) binding site. The next 5 membrane-spanning stretches (helical) occupy residues 43 to 63 (WFFKLFGTQFALSLIPLGGYV), 94 to 114 (LWILFGGAFFNFLFAVLVYFF), 249 to 269 (LIMGSASVKELSGVIGIVGAL), 277 to 297 (MLLLFGAFLSINLGILNLLPI), and 326 to 346 (LWLVGVGFLVFVMFLGLFNDI). The PDZ domain maps to 108-177 (AVLVYFFLAL…GELILEIERN (70 aa)).

Belongs to the peptidase M50B family. Zn(2+) serves as cofactor.

It is found in the cell inner membrane. The polypeptide is Putative zinc metalloprotease jhp_0242 (Helicobacter pylori (strain J99 / ATCC 700824) (Campylobacter pylori J99)).